The sequence spans 365 residues: UDP-N-acetylglucosamine--N-acetylmuramyl-(pentapeptide) pyrophosphoryl-undecaprenol N-acetylglucosamine transferase (365 aa).

Residues 10–12 (TGG), asparagine 128, arginine 170, serine 199, isoleucine 250, and glutamine 295 each bind UDP-N-acetyl-alpha-D-glucosamine.

It belongs to the glycosyltransferase 28 family. MurG subfamily.

Its subcellular location is the cell inner membrane. The enzyme catalyses di-trans,octa-cis-undecaprenyl diphospho-N-acetyl-alpha-D-muramoyl-L-alanyl-D-glutamyl-meso-2,6-diaminopimeloyl-D-alanyl-D-alanine + UDP-N-acetyl-alpha-D-glucosamine = di-trans,octa-cis-undecaprenyl diphospho-[N-acetyl-alpha-D-glucosaminyl-(1-&gt;4)]-N-acetyl-alpha-D-muramoyl-L-alanyl-D-glutamyl-meso-2,6-diaminopimeloyl-D-alanyl-D-alanine + UDP + H(+). It participates in cell wall biogenesis; peptidoglycan biosynthesis. Cell wall formation. Catalyzes the transfer of a GlcNAc subunit on undecaprenyl-pyrophosphoryl-MurNAc-pentapeptide (lipid intermediate I) to form undecaprenyl-pyrophosphoryl-MurNAc-(pentapeptide)GlcNAc (lipid intermediate II). The sequence is that of UDP-N-acetylglucosamine--N-acetylmuramyl-(pentapeptide) pyrophosphoryl-undecaprenol N-acetylglucosamine transferase from Pelodictyon phaeoclathratiforme (strain DSM 5477 / BU-1).